A 118-amino-acid polypeptide reads, in one-letter code: Small ribosomal subunit protein uS13 (118 aa).

The interval 91 to 118 (HRRGLPVRGQRTKTNARTRKGPRKPIKK) is disordered.

It belongs to the universal ribosomal protein uS13 family. As to quaternary structure, part of the 30S ribosomal subunit. Forms a loose heterodimer with protein S19. Forms two bridges to the 50S subunit in the 70S ribosome.

Located at the top of the head of the 30S subunit, it contacts several helices of the 16S rRNA. In the 70S ribosome it contacts the 23S rRNA (bridge B1a) and protein L5 of the 50S subunit (bridge B1b), connecting the 2 subunits; these bridges are implicated in subunit movement. Contacts the tRNAs in the A and P-sites. This Hamiltonella defensa subsp. Acyrthosiphon pisum (strain 5AT) protein is Small ribosomal subunit protein uS13.